We begin with the raw amino-acid sequence, 399 residues long: Lipase member K (399 aa).

The signal sequence occupies residues 1 to 19 (MWQLLAAACWMLLLGSMYG). The 301-residue stretch at 78–378 (PAVYLQHGLI…HYNHVDFYLG (301 aa)) folds into the AB hydrolase-1 domain. The Nucleophile role is filled by Ser172. Cys246 and Cys255 are oxidised to a cystine. 2 N-linked (GlcNAc...) asparagine glycosylation sites follow: Asn271 and Asn327. Catalysis depends on charge relay system residues Asp343 and His372.

This sequence belongs to the AB hydrolase superfamily. Lipase family. As to expression, exclusively expressed in the epidermis within the granular keratinocytes.

It is found in the secreted. Plays a highly specific role in the last step of keratinocyte differentiation. May have an essential function in lipid metabolism of the most differentiated epidermal layers. The protein is Lipase member K (LIPK) of Homo sapiens (Human).